A 407-amino-acid chain; its full sequence is Protein trichome birefringence-like 12 (407 aa).

A helical; Signal-anchor for type II membrane protein transmembrane segment spans residues 21–41 (SLLPRILLLSLLLLLFYSLIL). Residues 130-132 (GDS) carry the GDS motif motif. Residues 379–393 (DCMHWCLPGVPDTWV) carry the DCXHWCLPGXXDXWN motif motif.

Belongs to the PC-esterase family. TBL subfamily.

It is found in the membrane. May act as a bridging protein that binds pectin and other cell wall polysaccharides. Probably involved in maintaining esterification of pectins. May be involved in the specific O-acetylation of cell wall polymers. This is Protein trichome birefringence-like 12 (TBL12) from Arabidopsis thaliana (Mouse-ear cress).